We begin with the raw amino-acid sequence, 141 residues long: Nucleoside diphosphate kinase (141 aa).

The ATP site is built by Lys11, Phe59, Arg87, Thr93, Arg104, and Asn114. The Pros-phosphohistidine intermediate role is filled by His117.

The protein belongs to the NDK family. In terms of assembly, homotetramer. Requires Mg(2+) as cofactor.

It is found in the cytoplasm. It carries out the reaction a 2'-deoxyribonucleoside 5'-diphosphate + ATP = a 2'-deoxyribonucleoside 5'-triphosphate + ADP. The catalysed reaction is a ribonucleoside 5'-diphosphate + ATP = a ribonucleoside 5'-triphosphate + ADP. Its function is as follows. Major role in the synthesis of nucleoside triphosphates other than ATP. The ATP gamma phosphate is transferred to the NDP beta phosphate via a ping-pong mechanism, using a phosphorylated active-site intermediate. This chain is Nucleoside diphosphate kinase, found in Cellvibrio japonicus (strain Ueda107) (Pseudomonas fluorescens subsp. cellulosa).